A 319-amino-acid chain; its full sequence is uncharacterized protein (319 aa).

Positions Ile36–Phe178 constitute an SIS domain. Position 51-56 (Gly51–Gly56) interacts with ATP. CBS domains are found at residues Met203 to Thr263 and Met268 to Ser319.

Belongs to the SIS family. GutQ/KpsF subfamily.

This is an uncharacterized protein from Rickettsia prowazekii (strain Madrid E).